We begin with the raw amino-acid sequence, 266 residues long: UPF0294 protein YafD (266 aa).

This sequence belongs to the UPF0294 family.

It localises to the cytoplasm. The sequence is that of UPF0294 protein YafD from Salmonella typhi.